A 159-amino-acid chain; its full sequence is 2-C-methyl-D-erythritol 2,4-cyclodiphosphate synthase (159 aa).

A divalent metal cation-binding residues include D10 and H12. 4-CDP-2-C-methyl-D-erythritol 2-phosphate is bound by residues 10–12 and 36–37; these read DVH and HS. H44 is an a divalent metal cation binding site. 4-CDP-2-C-methyl-D-erythritol 2-phosphate-binding positions include 58 to 60, 63 to 67, and R144; these read DIG and FSDTD.

It belongs to the IspF family. As to quaternary structure, homotrimer. It depends on a divalent metal cation as a cofactor.

The catalysed reaction is 4-CDP-2-C-methyl-D-erythritol 2-phosphate = 2-C-methyl-D-erythritol 2,4-cyclic diphosphate + CMP. The protein operates within isoprenoid biosynthesis; isopentenyl diphosphate biosynthesis via DXP pathway; isopentenyl diphosphate from 1-deoxy-D-xylulose 5-phosphate: step 4/6. In terms of biological role, involved in the biosynthesis of isopentenyl diphosphate (IPP) and dimethylallyl diphosphate (DMAPP), two major building blocks of isoprenoid compounds. Catalyzes the conversion of 4-diphosphocytidyl-2-C-methyl-D-erythritol 2-phosphate (CDP-ME2P) to 2-C-methyl-D-erythritol 2,4-cyclodiphosphate (ME-CPP) with a corresponding release of cytidine 5-monophosphate (CMP). The polypeptide is 2-C-methyl-D-erythritol 2,4-cyclodiphosphate synthase (Paraburkholderia phytofirmans (strain DSM 17436 / LMG 22146 / PsJN) (Burkholderia phytofirmans)).